Here is a 238-residue protein sequence, read N- to C-terminus: tRNA1(Val) (adenine(37)-N6)-methyltransferase (238 aa).

Belongs to the methyltransferase superfamily. tRNA (adenine-N(6)-)-methyltransferase family.

It localises to the cytoplasm. The enzyme catalyses adenosine(37) in tRNA1(Val) + S-adenosyl-L-methionine = N(6)-methyladenosine(37) in tRNA1(Val) + S-adenosyl-L-homocysteine + H(+). Functionally, specifically methylates the adenine in position 37 of tRNA(1)(Val) (anticodon cmo5UAC). In Cytophaga hutchinsonii (strain ATCC 33406 / DSM 1761 / CIP 103989 / NBRC 15051 / NCIMB 9469 / D465), this protein is tRNA1(Val) (adenine(37)-N6)-methyltransferase.